A 199-amino-acid polypeptide reads, in one-letter code: MNIRSLERAGRAGKQDGVAVSPGQEEEVQNCVSTHDSNWPVIKDHSVKLHRVSPLLLQCRITHSSRWIAQVLASELSLLAFILLVVMVFSKKWLCFERIRFYQHWTMNVTTKIYTSVHIMSLGLLHIYKSKSYSNSEWESFKLWTNHPAFGVAKITFCLALGLGIILTIWLHLPYIPGLQKLPFFGWIGTVMSFCEGAL.

Residues M1–K14 are compositionally biased toward basic and acidic residues. Residues M1 to E25 are disordered. S53 bears the Phosphoserine mark. The next 3 membrane-spanning stretches (helical) occupy residues I68–V88, V109–Y128, and L159–L179.

It is found in the membrane. Its function is as follows. Component of the outer dense fibers (ODF) of spermatozoa which could be involved in sperm tail structure, sperm movement and general organization of cellular cytoskeleton. The protein is Outer dense fiber protein 4 (ODF4) of Bos taurus (Bovine).